Reading from the N-terminus, the 299-residue chain is Tyrosine recombinase XerC (299 aa).

The region spanning 1 to 85 is the Core-binding (CB) domain; sequence MEQHLDAYCM…AVRGFYKYLN (85 aa). The region spanning 106–285 is the Tyr recombinase domain; it reads RLPKTLDTDR…DFQHLATVYD (180 aa). Catalysis depends on residues arginine 146, lysine 170, histidine 237, arginine 240, and histidine 263. Tyrosine 272 (O-(3'-phospho-DNA)-tyrosine intermediate) is an active-site residue.

The protein belongs to the 'phage' integrase family. XerC subfamily. Forms a cyclic heterotetrameric complex composed of two molecules of XerC and two molecules of XerD.

Its subcellular location is the cytoplasm. Site-specific tyrosine recombinase, which acts by catalyzing the cutting and rejoining of the recombining DNA molecules. The XerC-XerD complex is essential to convert dimers of the bacterial chromosome into monomers to permit their segregation at cell division. It also contributes to the segregational stability of plasmids. This Pseudomonas syringae pv. tomato (strain ATCC BAA-871 / DC3000) protein is Tyrosine recombinase XerC.